A 667-amino-acid chain; its full sequence is Acyl-coenzyme A oxidase acox-3 (667 aa).

Residues 138–141 (FCLT), 146–147 (GS), glycine 178, arginine 313, 334–337 (QQYR), and glycine 410 contribute to the FAD site. Glutamate 433 (proton acceptor) is an active-site residue. Glutamate 435 contacts FAD. Positions 665 to 667 (SKL) match the Microbody targeting signal motif.

It belongs to the acyl-CoA oxidase family. In terms of assembly, homodimer. The cofactor is FAD. In terms of tissue distribution, expressed in intestine.

Its subcellular location is the peroxisome. It catalyses the reaction IC-asc-C7-CoA + O2 = IC-asc-DeltaC7-CoA + H2O2. The catalysed reaction is IC-asc-C9-CoA + O2 = IC-asc-DeltaC9-CoA + H2O2. It carries out the reaction asc-C13-CoA + O2 = asc-DeltaC13-CoA + H2O2. It functions in the pathway lipid metabolism; peroxisomal fatty acid beta-oxidation. In contrast to other acyl-coenzyme A oxidases which bind to and are activated by ATP, does not bind ATP. Involved in the first step of peroxisomal beta-oxidation by catalyzing the desaturation of fatty acid-derived side chains of ascaroside pheromones, which regulates development and behavior. Specifically, shortens indol-3-carbonyl(IC)-ascarosides with 7-carbon (IC-asc-C7) or 9-carbon (IC-asc-C9) side chains and contributes to the shortening of ascarosides with 13-carbon (asc-C13) and 15-carbon (asc-C15) side chains. This Caenorhabditis elegans protein is Acyl-coenzyme A oxidase acox-3.